The sequence spans 532 residues: Alkaline phosphatase (532 aa).

Residues 1-20 (MASERDPLLPVHGEGPESPS) are disordered. Residues 27–47 (WIKHGILLILVLSTVIFFYFF) form a helical; Signal-anchor for type II membrane protein membrane-spanning segment. Asp68 serves as a coordination point for Mg(2+). Position 68 (Asp68) interacts with Zn(2+). Ser115 serves as the catalytic Phosphoserine intermediate. Positions 166, 168, and 306 each coordinate Mg(2+). Zn(2+) contacts are provided by Asp311, His315, Asp352, His353, and His456.

Belongs to the alkaline phosphatase family. It depends on Mg(2+) as a cofactor. Requires Zn(2+) as cofactor.

Its subcellular location is the membrane. It carries out the reaction a phosphate monoester + H2O = an alcohol + phosphate. The sequence is that of Alkaline phosphatase from Schizosaccharomyces pombe (strain 972 / ATCC 24843) (Fission yeast).